We begin with the raw amino-acid sequence, 120 residues long: Chaperonin GroEL (120 aa).

Position 23–27 (23–27 (DGTTT)) interacts with ATP.

Belongs to the chaperonin (HSP60) family. As to quaternary structure, forms a cylinder of 14 subunits composed of two heptameric rings stacked back-to-back. Interacts with the co-chaperonin GroES.

It is found in the cytoplasm. It carries out the reaction ATP + H2O + a folded polypeptide = ADP + phosphate + an unfolded polypeptide.. Together with its co-chaperonin GroES, plays an essential role in assisting protein folding. The GroEL-GroES system forms a nano-cage that allows encapsulation of the non-native substrate proteins and provides a physical environment optimized to promote and accelerate protein folding. This chain is Chaperonin GroEL, found in Mycolicibacterium rhodesiae (Mycobacterium rhodesiae).